The chain runs to 89 residues: MSMPYDNEAKIKQAVILLQKIVNDTSVPRNIRRAATDAIRNLQDLGLSPAVRAANAIGILEDISQDPNMPTHARISIWNVVSILETVKD.

This sequence belongs to the UPF0147 family.

The protein is UPF0147 protein YN1551_1489 of Saccharolobus islandicus (strain Y.N.15.51 / Yellowstone #2) (Sulfolobus islandicus).